A 373-amino-acid polypeptide reads, in one-letter code: UDP-3-O-acylglucosamine N-acyltransferase 2 (373 aa).

The active-site Proton acceptor is histidine 257. Positions 346–373 (DGRTAASAEAAAPSSDATGVDQPDQAAS) are disordered. The segment covering 350 to 362 (AASAEAAAPSSDA) has biased composition (low complexity).

It belongs to the transferase hexapeptide repeat family. LpxD subfamily. In terms of assembly, homotrimer.

It catalyses the reaction a UDP-3-O-[(3R)-3-hydroxyacyl]-alpha-D-glucosamine + a (3R)-hydroxyacyl-[ACP] = a UDP-2-N,3-O-bis[(3R)-3-hydroxyacyl]-alpha-D-glucosamine + holo-[ACP] + H(+). It participates in bacterial outer membrane biogenesis; LPS lipid A biosynthesis. In terms of biological role, catalyzes the N-acylation of UDP-3-O-acylglucosamine using 3-hydroxyacyl-ACP as the acyl donor. Is involved in the biosynthesis of lipid A, a phosphorylated glycolipid that anchors the lipopolysaccharide to the outer membrane of the cell. The chain is UDP-3-O-acylglucosamine N-acyltransferase 2 from Rhodopseudomonas palustris (strain BisB18).